We begin with the raw amino-acid sequence, 334 residues long: WD repeat-containing protein 54 (334 aa).

WD repeat units lie at residues 116 to 155 (SSVQ…PNIV), 162 to 206 (GHQT…TLLT), and 250 to 289 (AHAR…ESGS).

Homodimer and homotrimer; forms tight forms of dimers and trimers. Interacts with IZUMO1 and IZUMO1R/JUNO. In terms of processing, cross-linked to tightly form both dimers and trimers by TGM2. Cross-linking enhances the activation of EGF receptor-mediated signaling pathway. Cross-linking is inhibited by EGF. Ubiquitinated. EGF increases ubiquitination.

Its subcellular location is the vesicle. It localises to the cytoplasm. The protein resides in the cell membrane. Its function is as follows. Plays a role in the adhesion and fusion of the sperm-oocyte membrane through its interactions with IZUMO1 and IZUMO1R/JUNO. When cross-linked to form dimers and trimers, it has a regulatory effect on ERK signaling pathway activity in response to EGF stimulation. Colocalizes with the EGF receptor in WDR54-specific vesicle where it sustains the internalization and controls the degradation of the EGF receptor after EGF stimulation. The polypeptide is WD repeat-containing protein 54 (Mus musculus (Mouse)).